The chain runs to 183 residues: Ribosome-recycling factor (183 aa).

Belongs to the RRF family.

The protein localises to the cytoplasm. Functionally, responsible for the release of ribosomes from messenger RNA at the termination of protein biosynthesis. May increase the efficiency of translation by recycling ribosomes from one round of translation to another. In Acetivibrio thermocellus (strain ATCC 27405 / DSM 1237 / JCM 9322 / NBRC 103400 / NCIMB 10682 / NRRL B-4536 / VPI 7372) (Clostridium thermocellum), this protein is Ribosome-recycling factor.